The following is a 72-amino-acid chain: Protein kish-A (72 aa).

The first 26 residues, 1–26 (MSAIFNFQSLLTVILLLICTCAYIRS), serve as a signal peptide directing secretion. Over 27–53 (LAPSLLDRNKTGLLGIFWKCARIGERK) the chain is Extracellular. The N-linked (GlcNAc...) asparagine glycan is linked to Asn35. The chain crosses the membrane as a helical span at residues 54 to 71 (SPYVAVCCIVMAFSILFI). Gln72 is a topological domain (cytoplasmic).

The protein belongs to the KISH family.

Its subcellular location is the golgi apparatus membrane. Its function is as follows. Involved in the early part of the secretory pathway. The protein is Protein kish-A (TMEM167A) of Bos taurus (Bovine).